The primary structure comprises 285 residues: Probable endonuclease 4 (285 aa).

The Zn(2+) site is built by His69, His109, Glu145, Asp179, His182, His216, Asp229, His231, and Glu261.

This sequence belongs to the AP endonuclease 2 family. Zn(2+) is required as a cofactor.

It catalyses the reaction Endonucleolytic cleavage to 5'-phosphooligonucleotide end-products.. Functionally, endonuclease IV plays a role in DNA repair. It cleaves phosphodiester bonds at apurinic or apyrimidinic (AP) sites, generating a 3'-hydroxyl group and a 5'-terminal sugar phosphate. The protein is Probable endonuclease 4 of Escherichia coli O1:K1 / APEC.